Reading from the N-terminus, the 543-residue chain is DM7 family protein GG19680 (543 aa).

Residues 415-430 show a composition bias toward basic and acidic residues; that stretch reads GETQEMDEAHPTKEES. Residues 415 to 443 form a disordered region; it reads GETQEMDEAHPTKEESKSEEEGEVQSGSQ.

Belongs to the DM7 family.

The polypeptide is DM7 family protein GG19680 (Drosophila erecta (Fruit fly)).